The following is a 592-amino-acid chain: Dictomallein-1 (592 aa).

An N-terminal signal peptide occupies residues 1–19 (MKILIILLVFLNLITNINC). The region spanning 140–402 (PNIGHETNLN…QNYFKDSIIY (263 aa)) is the Peptidase M66 domain. Residue His294 participates in Zn(2+) binding. Glu295 is an active-site residue. His298 and His304 together coordinate Zn(2+).

This sequence belongs to the dictomallein family. Zn(2+) is required as a cofactor.

The protein localises to the secreted. The protein is Dictomallein-1 (dtmlA) of Dictyostelium discoideum (Social amoeba).